A 200-amino-acid chain; its full sequence is Ribonuclease HII (200 aa).

Positions 1 to 200 (MRYGGVDEAG…EINKKLTDFI (200 aa)) constitute an RNase H type-2 domain. Asp7, Glu8, and Asp99 together coordinate a divalent metal cation.

The protein belongs to the RNase HII family. It depends on Mn(2+) as a cofactor. Mg(2+) serves as cofactor.

It localises to the cytoplasm. It carries out the reaction Endonucleolytic cleavage to 5'-phosphomonoester.. Its function is as follows. Endonuclease that specifically degrades the RNA of RNA-DNA hybrids. The sequence is that of Ribonuclease HII from Nanoarchaeum equitans (strain Kin4-M).